We begin with the raw amino-acid sequence, 316 residues long: Pantothenate kinase (316 aa).

Residue 95 to 102 (GSVAVGKS) coordinates ATP.

Belongs to the prokaryotic pantothenate kinase family.

Its subcellular location is the cytoplasm. The enzyme catalyses (R)-pantothenate + ATP = (R)-4'-phosphopantothenate + ADP + H(+). It participates in cofactor biosynthesis; coenzyme A biosynthesis; CoA from (R)-pantothenate: step 1/5. In Shewanella woodyi (strain ATCC 51908 / MS32), this protein is Pantothenate kinase.